A 196-amino-acid polypeptide reads, in one-letter code: Hibernation-associated plasma protein HP-20 (196 aa).

Residues 1–23 form the signal peptide; sequence MTDVWRLAIFVLMVNVLNDQVSC. The Collagen-like domain occupies 25–63; the sequence is GPPGPVGYPGVPGVPGPRGPPGQPGAAGRPGDPGPKGPS. The span at 28-47 shows a compositional bias: pro residues; sequence GPVGYPGVPGVPGPRGPPGQ. The disordered stretch occupies residues 28 to 64; that stretch reads GPVGYPGVPGVPGPRGPPGQPGAAGRPGDPGPKGPSV. The C1q domain maps to 67–196; sequence PCRERSAFTV…IYFSGFLISS (130 aa).

Plasma; synthesized in the liver.

The protein localises to the secreted. In terms of biological role, plasma proteins HP-20, HP-25, HP-27 and HP-55 form a 140 kDa complex via disulfide bonds in the plasma and are hibernation specific. In Tamias sibiricus (Siberian chipmunk), this protein is Hibernation-associated plasma protein HP-20.